A 271-amino-acid polypeptide reads, in one-letter code: Urease accessory protein UreD (271 aa).

Belongs to the UreD family. In terms of assembly, ureD, UreF and UreG form a complex that acts as a GTP-hydrolysis-dependent molecular chaperone, activating the urease apoprotein by helping to assemble the nickel containing metallocenter of UreC. The UreE protein probably delivers the nickel.

The protein localises to the cytoplasm. In terms of biological role, required for maturation of urease via the functional incorporation of the urease nickel metallocenter. The polypeptide is Urease accessory protein UreD (Haemophilus influenzae (strain PittGG)).